Consider the following 1365-residue polypeptide: Killer toxin-resistance protein 5 (1365 aa).

The signal sequence occupies residues 1–17 (MRLLALVLLLLCAPLRA). Asn-115, Asn-228, Asn-293, Asn-457, Asn-519, Asn-523, Asn-644, Asn-870, Asn-1091, Asn-1150, and Asn-1195 each carry an N-linked (GlcNAc...) asparagine glycan. A disordered region spans residues 1334–1365 (FASSPGDEDVPGESVSSKYQDSDNAAPLHDEL). Residues 1347–1356 (SVSSKYQDSD) are compositionally biased toward polar residues. Positions 1362 to 1365 (HDEL) match the Prevents secretion from ER motif.

It to D.melanogaster UGGG.

The protein localises to the endoplasmic reticulum lumen. In terms of biological role, required for (1-&gt;6)-beta-D-glucan synthesis and normal cell growth. This is Killer toxin-resistance protein 5 (KRE5) from Saccharomyces cerevisiae (strain ATCC 204508 / S288c) (Baker's yeast).